A 140-amino-acid polypeptide reads, in one-letter code: ATP synthase epsilon chain (140 aa).

The protein belongs to the ATPase epsilon chain family. F-type ATPases have 2 components, CF(1) - the catalytic core - and CF(0) - the membrane proton channel. CF(1) has five subunits: alpha(3), beta(3), gamma(1), delta(1), epsilon(1). CF(0) has three main subunits: a, b and c.

The protein localises to the cell inner membrane. Produces ATP from ADP in the presence of a proton gradient across the membrane. The sequence is that of ATP synthase epsilon chain from Colwellia maris.